Here is a 176-residue protein sequence, read N- to C-terminus: ATP-dependent protease subunit HslV (176 aa).

Thr2 is an active-site residue. Residues Gly157, Cys160, and Thr163 each contribute to the Na(+) site.

This sequence belongs to the peptidase T1B family. HslV subfamily. In terms of assembly, a double ring-shaped homohexamer of HslV is capped on each side by a ring-shaped HslU homohexamer. The assembly of the HslU/HslV complex is dependent on binding of ATP.

It is found in the cytoplasm. It carries out the reaction ATP-dependent cleavage of peptide bonds with broad specificity.. With respect to regulation, allosterically activated by HslU binding. Functionally, protease subunit of a proteasome-like degradation complex believed to be a general protein degrading machinery. The polypeptide is ATP-dependent protease subunit HslV (Pectobacterium carotovorum subsp. carotovorum (strain PC1)).